Consider the following 2883-residue polypeptide: MSCNGGSHPRINTLGRMTRAESGPDLRYEMTYSGGGGGGGGGGGGGTSRTFYSHSRRCTVNDQNSDGYCQTGTMSRHQNQNTIQEMLQNCSDCLMRAELIAQPELKFGEGMQLAWNRELDEYFTQANDQMEIIDGLIREMRQMGQPCDAYQKRLLQLQEQMRALYKAISVPRVRRASSKGAGGYTCQSGSGWDEFTKRLTGECLGWMRQQREEMDLMAWGVDAGSVEQHINSHRSIHNTIGDYRWQLDKIKADLREKSAIYQLEEEYENLLKASFERMDHLRQLQNIIQATSREIMWINDCEEEELLYDWSDKNTNIAQKQEAFSIRMSQLEVKEKELNKLKQESDQLVLNQHPASDKIEAYMDTLQTQWSWILQITKCIDVHLKENAAYFQFFEEAQSTEAYLKGLQDSIRKKYPCDKNMPLQHLLEQIKELEKEREKIIEYKRQVQNLVNKSKKIVQLKPRNPDYRSNKPIILRALCDYKQDQKIVHKGDECILKDNNERSKWYVTGPGGVDMLVPSVGLIIPPPNPLAVDLSCKIEQYYEAILALWNQLYINMKSLVSWHYCMIDIEKIRAMTIAKLKTMRQEDYMKTIEDLELHYQDFIKNSQGSEMFGDDDKRRMQSQFTDAQKHYQTLVIQLPGHPQHQTVTKTEITHLGTCQDVNHNKVIETNRENDKQETWLLMELQKIRRQMEHCEARMTLKNLLLAEQGSTHHITVKINELKSVQNDSQALAEVLNQLKDMLANFRGSEKYCYLQNEIFGLFQKLENINGVSDGYLNSLCSVRALLQAILQTEDMLKVYEARLTEEETVCLDLDKVEAYRCGLKKIKNDLNLKKSLLATMKTELQKAQQIHSQSSQQYPLYDLDLGKFTEKVTQLTDRWQKIDKQIDFRLWDLEKQIKQLRNYRDNYQSFCKWLYDAKRRQDSLESMKFGDSNTVMRFLNEQKNLHSEISGKRDKSEEVHKIAELCANSIKDYELQLASYTSGLETLLNIPIKRTMVQSPSGVILQEAADIHARYIELLTRSGDYYRFLSEMLKSLEDLKLKNTKIEVLEEELRLARDANSENCNKNKFLDQNLQKYQAECSQFKAKLVSLEELKRQAELDGKSAKQNLDKCYGQIKELNEKITRLTYEIEDEKRRRKTVEDRFDQQKNDYDQLQKARQCEKENLSWQKLESEKAIKEKEYEIERLRVLLQEEGARKREYENELAKVRNHYNEEMSNLRNKYETEINITKTTIKEISMQKEDDSKNLRNQMDRLSRENRDLKDEIVRLNDSILQATEQRRRAEENALQQKACGSETMQKKQRLEIELKQVIQQRSEDNARHKQSLEEAAKTIQDKNKEIERLKAEYQEEAKRRWEYENELSKVRNSYDEEIISLKNQFETEINITKTTIHQLTMQKEEDTSGYRAQIDNLTRENRSLCEEVKRLKNTLAQTTENLRRVEENAQQQKATGSEMSQRKQQLEIELRQVTQMRTEESMRYKQSLDDAAKTIQDKNKEIERLKQLVDKETNERKCLEDENSKLQRVQYDLQKANNSATEAMSKLKVQEQELTRLRIDYERVSQERTVKDQDITRIQSSLKDLQLQKQKAEEELSRLKRTASDESSKRKMLEEELEAMRRSLKEQAVKITNLTQQLEQASIVKKRSEDDLRQQRDVLDGHVREKQRTQEELRRLSLDVEALRRQLVQEQENVKQAHLRNEHFQKAIEDKSRSLNESKIEIERLQSLTENLTKEHLMLEEELRNLRLEYDDLRRGRSEADSDKNSTISELRSQLQISNNRTLELQGLINDLQRERENLRQEIEKFQKQALEASNRIQESKSQCTQVVQERESLLVKIKVLEQDKARLQRLEDELNRAKATLEAESRVKQRLECEKQQIQNDLNQWKTQYSRKEETIRKIESEREKSEREKNSLRSEIERLQAEIKRIEERCRRKLEDSSRETQSQLESERCRLQKEIEKLRQRPYGSHRETQTEYEWTVDSSKLVFDGLRKKVTAMQLYECQLIDKTTLDKLLKGKKSVEEVASEIQPFLRGAGAIAGASASPKEKYSLVEAKRKKFITPESTVMLLEAQAATGGIIDPHRNEKLTVDNAVARDLIDFDDRQQIYTAEKAITGFDDPFSGKTVSVSEAIKKNLIDRETGMRLLEAQLASGGVVDPVNSVFLPKDVALARGLIDRDLYRSLNDPRDSQKNFVDPITKKKVSYMQLRERCRIEPHTGLLLLSVQKRSMSFQGIRQPVTVTELVDSGILRPSTVNELESGQISYDEVGERIKDFLQGSSCIAGIYNETTKQKLGIYEAMKIGLVRPGTALELLEAQAATGFIVDPVSNLRLPVEEAYKRGLVGIEFKEKLLSAERAVTGYNDPETGNIISLFQAMNKELIEKGHGIRLLEAQIATGGIIDPKESHRLPVDMAYKRGYFNEELSEILSDPSDDTKGFFDPNTEENLTYLQLKERCIKDEETGLCLLPLKEKKKQVQTSQKNTLRKRRVVIVDPETNKEMSVQEAYKKGLIDYDTFKELCEQECEWEEITITGSDGSTRVVLVDRKTGSQYDIQDAIDKGLVDRKFFDQYRSGSLSLTQFADMISLKNGVGNSSGLGGSVNDDVFSSSRHDSVSKISTISSVRNLTIRSSSLSDPLEESSPIAAIFDTENLEKISIAEGIERGIVDSITGQRLLEAQACTGGIIHPTTGQKLSLQDAVNQGLIDQDMATRLKPAQKAFIGFEGVKGKKKMSAAEAVKEKWLPYEAGQRFLEFQFLTGGLVDPEVHGRISTEEAIRKGFIDGRAAQRLQDISSYAKILTCPKTKLKISYKDAMNRSMVEDITGLRLLEAASVSSKGLPSPYNMSAPGSRSGSRSGSRSGSRSGSRSGSRRGSFDATGNSSYSYSYSFSSSSIGGY.

A disordered region spans residues 1–21 (MSCNGGSHPRINTLGRMTRAE). The segment at 1 to 596 (MSCNGGSHPR…DYMKTIEDLE (596 aa)) is interaction with PKP1, JUP, PKP2. The segment at 1-1068 (MSCNGGSHPR…ANSENCNKNK (1068 aa)) is globular 1. Ser22 is subject to Phosphoserine. Position 59 is a phosphothreonine (Thr59). Phosphoserine is present on Ser65. Phosphotyrosine is present on Tyr68. Thr73 bears the Phosphothreonine mark. 3 positions are modified to phosphoserine: Ser177, Ser178, and Ser188. 2 Spectrin repeats span residues 190-283 (SGWD…HLRQ) and 284-387 (LQNI…LKEN). The stretch at 388–458 (AAYFQFFEEA…NLVNKSKKIV (71 aa)) is one Spectrin 3a repeat. In terms of domain architecture, SH3 spans 470–527 (NKPIILRALCDYKQDQKIVHKGDECILKDNNERSKWYVTGPGGVDMLVPSVGLIIPPP). Residues 528–557 (NPLAVDLSCKIEQYYEAILALWNQLYINMK) form a Spectrin 3b repeat. 3 Spectrin repeats span residues 558–639 (SLVS…IQLP), 666–781 (VIET…SLCS), and 782–895 (VRAL…DLEK). Residues 1034–1956 (KSLEDLKLKN…LQKEIEKLRQ (923 aa)) are a coiled coil. The central fibrous rod domain stretch occupies residues 1069–1957 (FLDQNLQKYQ…QKEIEKLRQR (889 aa)). Phosphoserine occurs at positions 1670, 1720, and 2036. A globular 2 region spans residues 1958 to 2882 (PYGSHRETQT…YSFSSSSIGG (925 aa)). The tract at residues 1972–2220 (TVDSSKLVFD…LLLSVQKRSM (249 aa)) is 4.5 X 38 AA tandem repeats (Domain A). 17 Plectin repeats span residues 2021-2057 (QPFL…PEST), 2058-2095 (VMLL…FDDR), 2096-2133 (QQIY…RETG), 2134-2171 (MRLL…RDLY), 2175-2209 (NDPR…PHTG), 2210-2245 (LLLL…PSTV), 2263-2300 (KDFL…PGTA), 2301-2338 (LELL…IEFK), 2339-2376 (EKLL…KGHG), 2377-2414 (IRLL…EELS), 2418-2452 (SDPS…EETG), 2468-2505 (SQKN…YDTF), 2519-2556 (TITG…RKFF), 2622-2659 (SDPL…SITG), 2660-2697 (QRLL…QDMA), 2736-2773 (QRFL…GRAA), and 2774-2811 (QRLQ…DITG). Ser2219, Ser2221, and Ser2237 each carry phosphoserine. Positions 2256 to 2458 (DEVGERIKDF…EETGLCLLPL (203 aa)) are 4.5 X 38 AA tandem repeats (Domain B). The Omega-hydroxyceramide glutamate ester moiety is linked to residue Gln2492. The segment at 2621–2833 (LSDPLEESSP…GLPSPYNMSA (213 aa)) is 4.5 X 38 AA tandem repeats (Domain C). Residues Ser2822 and Ser2827 each carry the phosphoserine modification. Positions 2822–2883 (SKGLPSPYNM…SFSSSSIGGY (62 aa)) are disordered. Phosphotyrosine is present on Tyr2829. Phosphoserine occurs at positions 2832 and 2836. The tract at residues 2835–2858 (GSRSGSRSGSRSGSRSGSRSGSRR) is 6 X 4 AA tandem repeats of G-S-R-[SR]. Low complexity predominate over residues 2835–2858 (GSRSGSRSGSRSGSRSGSRSGSRR). Residues Arg2837 and Arg2858 each carry the omega-N-methylarginine modification. A Phosphoserine modification is found at Ser2860. Thr2864 is subject to Phosphothreonine. Residues 2867–2883 (SSYSYSYSFSSSSIGGY) show a composition bias toward low complexity. Ser2879 carries the phosphoserine modification.

This sequence belongs to the plakin or cytolinker family. Homodimer. Interacts with COL17A1 (via cytoplasmic region). Interacts with DSC2. Interacts with PKP1. Interacts with PKP2. Interacts weakly with TMEM65. Phosphorylation at Ser-2860 increases association with intermediate filament cytokeratin, potentially facilitating interaction between desmosome junctions and intermediate filament architecture. In terms of tissue distribution, expressed in undifferentiated keratinocytes of the epidermis at birth, expression increases as differentiation proceeds (at protein level). Abundantly expressed in the suprabasal layers and weakly in the basal layers of the outer hair root sheath (at protein level). Expressed at intercalated disks in cardiomyocytes (at protein level).

It is found in the cell junction. It localises to the desmosome. The protein localises to the cell membrane. Its subcellular location is the cytoplasm. In terms of biological role, major high molecular weight protein of desmosomes. Regulates profibrotic gene expression in cardiomyocytes via activation of the MAPK14/p38 MAPK signaling cascade and increase in TGFB1 protein abundance. The sequence is that of Desmoplakin from Mus musculus (Mouse).